The primary structure comprises 458 residues: RuvB-like helicase 1 (458 aa).

An ATP-binding site is contributed by 71 to 78 (GGPGTGKT).

Belongs to the RuvB family. As to quaternary structure, may form heterododecamers with RVB2. Component of the SWR1 chromatin remodeling complex, the INO80 chromatin remodeling complex, and of the R2TP complex.

It is found in the nucleus. It carries out the reaction ATP + H2O = ADP + phosphate + H(+). Its function is as follows. DNA helicase which participates in several chromatin remodeling complexes, including the SWR1 and the INO80 complexes. The SWR1 complex mediates the ATP-dependent exchange of histone H2A for the H2A variant HZT1 leading to transcriptional regulation of selected genes by chromatin remodeling. The INO80 complex remodels chromatin by shifting nucleosomes and is involved in DNA repair. Also involved in pre-rRNA processing. This chain is RuvB-like helicase 1 (RVB1), found in Gibberella zeae (strain ATCC MYA-4620 / CBS 123657 / FGSC 9075 / NRRL 31084 / PH-1) (Wheat head blight fungus).